A 315-amino-acid chain; its full sequence is tRNA U34 carboxymethyltransferase (315 aa).

Carboxy-S-adenosyl-L-methionine contacts are provided by residues lysine 79, tryptophan 93, lysine 98, glycine 117, 142–144 (DPS), 169–170 (VE), tyrosine 193, and arginine 307.

This sequence belongs to the class I-like SAM-binding methyltransferase superfamily. CmoB family. In terms of assembly, homotetramer.

It carries out the reaction carboxy-S-adenosyl-L-methionine + 5-hydroxyuridine(34) in tRNA = 5-carboxymethoxyuridine(34) in tRNA + S-adenosyl-L-homocysteine + H(+). Its function is as follows. Catalyzes carboxymethyl transfer from carboxy-S-adenosyl-L-methionine (Cx-SAM) to 5-hydroxyuridine (ho5U) to form 5-carboxymethoxyuridine (cmo5U) at position 34 in tRNAs. In Helicobacter hepaticus (strain ATCC 51449 / 3B1), this protein is tRNA U34 carboxymethyltransferase.